A 262-amino-acid chain; its full sequence is ClpXP adapter protein SpxH (262 aa).

Belongs to the SpxH family. Interacts with Spx.

The protein localises to the cytoplasm. In terms of biological role, adapter protein required for efficient degradation of Spx by ClpXP under non-stress conditions. Interaction with Spx stabilizes Spx and exposes the C-terminus of Spx for recognition and proteolysis by ClpXP. This chain is ClpXP adapter protein SpxH, found in Staphylococcus saprophyticus subsp. saprophyticus (strain ATCC 15305 / DSM 20229 / NCIMB 8711 / NCTC 7292 / S-41).